The sequence spans 476 residues: tRNA(Ile)-lysidine synthase (476 aa).

ATP is bound at residue 30–35 (SGGPDS).

The protein belongs to the tRNA(Ile)-lysidine synthase family.

The protein resides in the cytoplasm. The enzyme catalyses cytidine(34) in tRNA(Ile2) + L-lysine + ATP = lysidine(34) in tRNA(Ile2) + AMP + diphosphate + H(+). Ligates lysine onto the cytidine present at position 34 of the AUA codon-specific tRNA(Ile) that contains the anticodon CAU, in an ATP-dependent manner. Cytidine is converted to lysidine, thus changing the amino acid specificity of the tRNA from methionine to isoleucine. This is tRNA(Ile)-lysidine synthase from Bacillus thuringiensis subsp. konkukian (strain 97-27).